Reading from the N-terminus, the 280-residue chain is Pantothenate synthetase (280 aa).

Residue 30–37 (MGYLHEGH) participates in ATP binding. The active-site Proton donor is His37. (R)-pantoate is bound at residue Gln61. Gln61 is a beta-alanine binding site. ATP is bound at residue 147 to 150 (GQKD). Gln153 serves as a coordination point for (R)-pantoate. ATP is bound by residues Val176 and 184–187 (MSSR).

The protein belongs to the pantothenate synthetase family. Homodimer.

Its subcellular location is the cytoplasm. The catalysed reaction is (R)-pantoate + beta-alanine + ATP = (R)-pantothenate + AMP + diphosphate + H(+). The protein operates within cofactor biosynthesis; (R)-pantothenate biosynthesis; (R)-pantothenate from (R)-pantoate and beta-alanine: step 1/1. Its function is as follows. Catalyzes the condensation of pantoate with beta-alanine in an ATP-dependent reaction via a pantoyl-adenylate intermediate. The polypeptide is Pantothenate synthetase (Thermotoga petrophila (strain ATCC BAA-488 / DSM 13995 / JCM 10881 / RKU-1)).